A 1006-amino-acid polypeptide reads, in one-letter code: Pentatricopeptide repeat-containing protein At1g30610, chloroplastic (1006 aa).

Residues 1–40 (MAVTISTNAFVNASLLDESRNSFWRPLFHQPYYNCRRVVR) constitute a chloroplast transit peptide. Disordered stretches follow at residues 180 to 219 (LSKSGESSVTVPEDESFRKRYSKQEYHRSSDTSRGIERGS) and 248 to 292 (SSVA…IARG). Over residues 194 to 219 (ESFRKRYSKQEYHRSSDTSRGIERGS) the composition is skewed to basic and acidic residues. The span at 254–263 (WSNSGESSVT) shows a compositional bias: polar residues. Residues 265–284 (PKDESFRRRYSKQEHHRSSD) show a composition bias toward basic and acidic residues. PPR repeat units lie at residues 468-502 (TDYTVMRLIHFLGKLGNWRRVLQVIEWLQRQDRYK), 506-536 (IRIIYTTALNVLGKSRRPVEALNVFHAMLLQ), 542-572 (DMVAYRSIAVTLGQAGHIKELFYVIDTMRSP), 592-626 (DVVVYNAVLNACVQRKQWEGAFWVLQQLKQRGQKP), 627-657 (SPVTYGLIMEVMLACEKYNLVHEFFRKMQKS), 661-695 (NALAYRVLVNTLWKEGKSDEAVHTVEDMESRGIVG), 759-789 (LVVTYTGLIQACVDSGNIKNAAYIFDQMKKV), 793-827 (NLVTCNIMLKAYLQGGLFEEARELFQKMSEDGNHI), 840-874 (DTYTFNTMLDTCAEQEKWDDFGYAYREMLRHGYHF), and 875-909 (NAKRHLRMVLEASRAGKEEVMEATWEHMRRSNRIP).

It belongs to the PPR family. P subfamily.

The protein resides in the plastid. It is found in the chloroplast. Its function is as follows. May play a role in embryogenesis. The chain is Pentatricopeptide repeat-containing protein At1g30610, chloroplastic (EMB2279) from Arabidopsis thaliana (Mouse-ear cress).